The following is a 261-amino-acid chain: 4-phosphopantoate--beta-alanine ligase (261 aa).

ATP-binding positions include arginine 17, arginine 39, 181-182 (DL), 187-188 (RS), and 199-200 (NI).

This sequence belongs to the archaeal phosphopantothenate synthetase family. As to quaternary structure, homodimer.

It catalyses the reaction (R)-4-phosphopantoate + beta-alanine + ATP = (R)-4'-phosphopantothenate + AMP + diphosphate + H(+). It participates in cofactor biosynthesis; coenzyme A biosynthesis. Functionally, catalyzes the condensation of (R)-4-phosphopantoate and beta-alanine to 4'-phosphopantothenate in the CoA biosynthesis pathway. This is 4-phosphopantoate--beta-alanine ligase from Thermococcus onnurineus (strain NA1).